The chain runs to 270 residues: Putative pyruvate, phosphate dikinase regulatory protein (270 aa).

149–156 (GVSRTSKT) is an ADP binding site.

The protein belongs to the pyruvate, phosphate/water dikinase regulatory protein family. PDRP subfamily.

It carries out the reaction N(tele)-phospho-L-histidyl/L-threonyl-[pyruvate, phosphate dikinase] + ADP = N(tele)-phospho-L-histidyl/O-phospho-L-threonyl-[pyruvate, phosphate dikinase] + AMP + H(+). It catalyses the reaction N(tele)-phospho-L-histidyl/O-phospho-L-threonyl-[pyruvate, phosphate dikinase] + phosphate + H(+) = N(tele)-phospho-L-histidyl/L-threonyl-[pyruvate, phosphate dikinase] + diphosphate. In terms of biological role, bifunctional serine/threonine kinase and phosphorylase involved in the regulation of the pyruvate, phosphate dikinase (PPDK) by catalyzing its phosphorylation/dephosphorylation. The chain is Putative pyruvate, phosphate dikinase regulatory protein from Sphingopyxis alaskensis (strain DSM 13593 / LMG 18877 / RB2256) (Sphingomonas alaskensis).